The sequence spans 581 residues: Proline--tRNA ligase (581 aa).

Belongs to the class-II aminoacyl-tRNA synthetase family. ProS type 1 subfamily. Homodimer.

The protein localises to the cytoplasm. The enzyme catalyses tRNA(Pro) + L-proline + ATP = L-prolyl-tRNA(Pro) + AMP + diphosphate. Catalyzes the attachment of proline to tRNA(Pro) in a two-step reaction: proline is first activated by ATP to form Pro-AMP and then transferred to the acceptor end of tRNA(Pro). As ProRS can inadvertently accommodate and process non-cognate amino acids such as alanine and cysteine, to avoid such errors it has two additional distinct editing activities against alanine. One activity is designated as 'pretransfer' editing and involves the tRNA(Pro)-independent hydrolysis of activated Ala-AMP. The other activity is designated 'posttransfer' editing and involves deacylation of mischarged Ala-tRNA(Pro). The misacylated Cys-tRNA(Pro) is not edited by ProRS. This chain is Proline--tRNA ligase, found in Verminephrobacter eiseniae (strain EF01-2).